The following is a 207-amino-acid chain: MPMRKRHFYRLLPLASLLLAACTIPVSKGPATSPTSPQWRQHEQQLQQLGQFETRGAFAYLSDKQKVYARFFWQQTSPERYRLLLTNPLGSTELELVVQPGVTQLTDNQGKRYVSDDPQEMIQKLTGMSIPLESLRQWILGLPGDTPNFTLDDKYRLKKLTYQQNGVTWVVNYQEYNTQVTPPLPSRLELNQDGQRIKLKMDSWTIK.

An N-terminal signal peptide occupies residues 1–21 (MPMRKRHFYRLLPLASLLLAA). Cys22 is lipidated: N-palmitoyl cysteine. A lipid anchor (S-diacylglycerol cysteine) is attached at Cys22.

This sequence belongs to the LolB family. In terms of assembly, monomer.

The protein resides in the cell outer membrane. In terms of biological role, plays a critical role in the incorporation of lipoproteins in the outer membrane after they are released by the LolA protein. In Yersinia pseudotuberculosis serotype O:1b (strain IP 31758), this protein is Outer-membrane lipoprotein LolB.